Here is a 412-residue protein sequence, read N- to C-terminus: Argininosuccinate synthase (412 aa).

Residue 8-16 (AYSGGLDTS) coordinates ATP. Tyr87 contacts L-citrulline. Position 117 (Gly117) interacts with ATP. Residues Thr119, Asn123, and Asp124 each coordinate L-aspartate. Asn123 lines the L-citrulline pocket. L-citrulline-binding residues include Arg127, Ser175, Glu259, and Tyr271.

Belongs to the argininosuccinate synthase family. Type 1 subfamily. In terms of assembly, homotetramer.

Its subcellular location is the cytoplasm. The catalysed reaction is L-citrulline + L-aspartate + ATP = 2-(N(omega)-L-arginino)succinate + AMP + diphosphate + H(+). The protein operates within amino-acid biosynthesis; L-arginine biosynthesis; L-arginine from L-ornithine and carbamoyl phosphate: step 2/3. This is Argininosuccinate synthase from Clavibacter michiganensis subsp. michiganensis (strain NCPPB 382).